The following is a 148-amino-acid chain: MFRTMMKSKIHRATVTHADLHYVGSVTVDQDLMDAADLLEGEQVCIVDIDNGARLETYVIAGERGTGVIGINGAAAHLVKPGDLVILIAYGVMNEQEVKEYSPRVVFVDADNKQIELGSDPAHAPEGSGLITPRMLSTLEASRESSLV.

The Schiff-base intermediate with substrate; via pyruvic acid role is filled by Ser25. A Pyruvic acid (Ser) modification is found at Ser25. Thr57 is a binding site for substrate. Tyr58 acts as the Proton donor in catalysis. 73–75 (GAA) lines the substrate pocket.

It belongs to the PanD family. As to quaternary structure, heterooctamer of four alpha and four beta subunits. It depends on pyruvate as a cofactor. Is synthesized initially as an inactive proenzyme, which is activated by self-cleavage at a specific serine bond to produce a beta-subunit with a hydroxyl group at its C-terminus and an alpha-subunit with a pyruvoyl group at its N-terminus.

It localises to the cytoplasm. The enzyme catalyses L-aspartate + H(+) = beta-alanine + CO2. Its pathway is cofactor biosynthesis; (R)-pantothenate biosynthesis; beta-alanine from L-aspartate: step 1/1. Catalyzes the pyruvoyl-dependent decarboxylation of aspartate to produce beta-alanine. This is Aspartate 1-decarboxylase from Rhodococcus erythropolis (strain PR4 / NBRC 100887).